We begin with the raw amino-acid sequence, 266 residues long: Manganese catalase (266 aa).

Glu-35 provides a ligand contact to Mn(2+). Asp-57 and Asp-61 together coordinate Ca(2+). Mn(2+) is bound by residues Glu-66, His-69, Glu-148, and His-181. The Ca(2+) site is built by Asn-218, Ser-220, and Gly-222. The segment at 243–266 (ENPEAMGGIPHIKPGDPRLHNHQG) is disordered. A compositionally biased stretch (basic and acidic residues) spans 255-266 (KPGDPRLHNHQG).

Belongs to the manganese catalase family. Homohexamer. Ca(2+) serves as cofactor. Mn(2+) is required as a cofactor.

The catalysed reaction is 2 H2O2 = O2 + 2 H2O. Catalyzes the decomposition of hydrogen peroxide into water and oxygen. The protein is Manganese catalase of Lactiplantibacillus plantarum (Lactobacillus plantarum).